The primary structure comprises 416 residues: Pectin acetylesterase 3 (416 aa).

An N-terminal signal peptide occupies residues 1-25 (MKSVLRIAAAIFWLWLFIVLGVIGS). A glycan (N-linked (GlcNAc...) asparagine) is linked at Asn131. Catalysis depends on charge relay system residues Ser198 and Asp294. Asn324 is a glycosylation site (N-linked (GlcNAc...) asparagine). The active-site Charge relay system is His361.

Belongs to the pectinacetylesterase family.

It is found in the secreted. The protein resides in the cell wall. Its function is as follows. Hydrolyzes acetyl esters in homogalacturonan regions of pectin. In type I primary cell wall, galacturonic acid residues of pectin can be acetylated at the O-2 and O-3 positions. Decreasing the degree of acetylation of pectin gels in vitro alters their physical properties. The sequence is that of Pectin acetylesterase 3 from Arabidopsis thaliana (Mouse-ear cress).